Reading from the N-terminus, the 369-residue chain is tRNA/tmRNA (uracil-C(5))-methyltransferase (369 aa).

The S-adenosyl-L-methionine site is built by Q190, Y218, N223, E239, and D301. Catalysis depends on C326, which acts as the Nucleophile. E360 functions as the Proton acceptor in the catalytic mechanism.

This sequence belongs to the class I-like SAM-binding methyltransferase superfamily. RNA M5U methyltransferase family. TrmA subfamily.

It carries out the reaction uridine(54) in tRNA + S-adenosyl-L-methionine = 5-methyluridine(54) in tRNA + S-adenosyl-L-homocysteine + H(+). The catalysed reaction is uridine(341) in tmRNA + S-adenosyl-L-methionine = 5-methyluridine(341) in tmRNA + S-adenosyl-L-homocysteine + H(+). In terms of biological role, dual-specificity methyltransferase that catalyzes the formation of 5-methyluridine at position 54 (m5U54) in all tRNAs, and that of position 341 (m5U341) in tmRNA (transfer-mRNA). This is tRNA/tmRNA (uracil-C(5))-methyltransferase from Vibrio cholerae serotype O1 (strain ATCC 39541 / Classical Ogawa 395 / O395).